The chain runs to 486 residues: MVATPSTSAPAKGVVRQVIGPVLDVEFPAGKLPKILNALRIEAKNPAGQDIALTAEVQQLLGDHRVRAVAMSGTDGLVRGMEATDTGAPISVPVGEATLGRIFNVLGEPVDEQGPVNTSDIAPIHRSAPKLTDLETKPKVFETGIKVIDLLAPYRQGGKVGLFGGAGVGKTVLIQELINNIAKEHGGVSVFGGVGERTREGNDLYEEFKESGVINADDLSQSKVALCFGQMNEPPGARMRVGLSALTMAEHFRDVNKQDVLLFVDNIFRFVQAGSEVSALLGRMPSAVGYQPTLGTDVGALQERITSTLEGSITSIQAVYVPADDLTDPAPATTFAHLDATTVLARGLAAKGIYPAVDPLDSTSTMLQPSVVGDEHYKTARAVQSTLQRYKELQDIIAILGLDELSEEDRLTVSRARKIEKFLSQPFFVAEIFTGMSGKYVKLEDTIAGFNMILAGELDDLPEQAFYLVGNIDEVKAKAEKIKEEK.

Gly164 to Thr171 contributes to the ATP binding site.

This sequence belongs to the ATPase alpha/beta chains family. F-type ATPases have 2 components, CF(1) - the catalytic core - and CF(0) - the membrane proton channel. CF(1) has five subunits: alpha(3), beta(3), gamma(1), delta(1), epsilon(1). CF(0) has four main subunits: a(1), b(1), b'(1) and c(9-12).

Its subcellular location is the cellular thylakoid membrane. It carries out the reaction ATP + H2O + 4 H(+)(in) = ADP + phosphate + 5 H(+)(out). In terms of biological role, produces ATP from ADP in the presence of a proton gradient across the membrane. The catalytic sites are hosted primarily by the beta subunits. The polypeptide is ATP synthase subunit beta (Prochlorococcus marinus subsp. pastoris (strain CCMP1986 / NIES-2087 / MED4)).